A 129-amino-acid polypeptide reads, in one-letter code: Large ribosomal subunit protein uL14m (129 aa).

It belongs to the universal ribosomal protein uL14 family.

It localises to the mitochondrion. This Acanthamoeba castellanii (Amoeba) protein is Large ribosomal subunit protein uL14m (RPL14).